Reading from the N-terminus, the 211-residue chain is Metalloproteinase inhibitor 3 (211 aa).

Residues 1–23 (MTPWLGLIVLLGSWSLGDWGAEA) form the signal peptide. C24 contacts Zn(2+). Involved in metalloproteinase-binding stretches follow at residues 24–27 (CTCS) and 88–89 (ES). 6 disulfides stabilise this stretch: C24-C91, C26-C118, C36-C143, C145-C192, C150-C155, and C163-C184. In terms of domain architecture, NTR spans 24 to 143 (CTCSPSHPQD…GLNYRYHLGC (120 aa)). Positions 105–188 (TGRVYDGKMY…SKHYACIRQK (84 aa)) are mediates interaction with EFEMP1. N207 carries N-linked (GlcNAc...) asparagine glycosylation.

It belongs to the protease inhibitor I35 (TIMP) family. In terms of assembly, interacts with EFEMP1. Interacts with KDR.

Its subcellular location is the secreted. It localises to the extracellular space. It is found in the extracellular matrix. Its function is as follows. Mediates a variety of processes including matrix regulation and turnover, inflammation, and angiogenesis, through reversible inhibition of zinc protease superfamily enzymes, primarily matrix metalloproteinases (MMPs). Regulates extracellular matrix (ECM) remodeling through inhibition of matrix metalloproteinases (MMP) including MMP-1, MMP-2, MMP-3, MMP-7, MMP-9, MMP-13, MMP-14 and MMP-15. Additionally, modulates the processing of amyloid precursor protein (APP) and apolipoprotein E receptor ApoER2 by inhibiting two alpha-secretases ADAM10 and ADAM17. Functions as a tumor suppressor and a potent inhibitor of angiogenesis. Exerts its anti-angiogenic effect by directly interacting with vascular endothelial growth factor (VEGF) receptor-2/KDR, preventing its binding to the VEGFA ligand. Selectively induces apoptosis in angiogenic endothelial cells through a caspase-independent cell death pathway. Mechanistically, inhibits matrix-induced focal adhesion kinase PTK2 tyrosine phosphorylation and association with paxillin/PXN and disrupts the incorporation of ITGB3, PTK2 and PXN into focal adhesion contacts on the matrix. The chain is Metalloproteinase inhibitor 3 (TIMP3) from Macaca mulatta (Rhesus macaque).